Here is a 1104-residue protein sequence, read N- to C-terminus: MKKNLKRGELTKLKLVERWSATFTLAAFILFNSSFKVLAADKKVENSNNGQITREINADQISKTELNNEVATDNNRPLGPSIAPSRARNNKIYTFDELNRMNYSDLVELIKTISYENVPDLFNFNDGSYTFFSNRDRVQAIIYGLEDSGRTYTADDDKGIPTLVEFLRAGYYLGFYNKQLSYLNTPQLKNECLPAMKAIQYNSNFRLGTKAQDGVVEALGRLIGNASADPEVINNCIYVLSDFKDNIDKYGSNYSKGNAVFNLMKGIDYYTNSVIYNTKGYDAKNTEFYNRIDPYMERLESLCTIGDKLNNDNAWLVNNALYYTGRMGKFREDPSISQRALERAMKEYPYLSYQYIEAANDLDLNFGGKNSSGNDIDFNKIKADAREKYLPKTYTFDDGKFVVKAGDKVTEEKIKRLYWASKEVKAQFMRVVQNDKALEEGNPDDILTVVIYNSPEEYKLNRIINGFSTDNGGIYIENIGTFFTYERTPEESIYTLEELFRHEFTHYLQGRYVVPGMWGQGEFYQEGVLTWYEEGTAEFFAGSTRTDGIKPRKSVTQGLAYDRNNRMSLYGVLHAKYGSWDFYNYGFALSNYMYNNNMGMFNKMTNYIKNNDVSGYKDYIASMSSDYGLNDKYQDYMDSLLNNIDNLDVPLVSDEYVNGHEAKDINEITNDIKEVSNIKDLSSNVEKSQFFTTYDMRGTYVGGRSQGEENDWKDMNSKLNDILKELSKKSWNGYKTVTAYFVNHKVDGNGNYVYDVVFHGMNTDTNTDVHVNKEPKAVIKSDSSVIVEEEINFDGTESKDEDGEIKAYEWDFGDGEKSNEAKATHKYNKTGEYEVKLTVTDNNGGINTESKKIKVVEDKPVEVINESEPNNDFEKANQIAKSNMLVKGTLSEEDYSDKYYFDVAKKGNVKITLNNLNSVGITWTLYKEGDLNNYVLYATGNDGTVLKGEKTLEPGRYYLSVYTYDNQSGTYTVNVKGNLKNEVKETAKDAIKEVENNNDFDKAMKVDSNSKIVGTLSNDDLKDIYSIDIQNPSDLNIVVENLDNIKMNWLLYSADDLSNYVDYANADGNKLSNTCKLNPGKYYLCVYQFENSGTGNYIVNLQNK.

Positions 1–39 (MKKNLKRGELTKLKLVERWSATFTLAAFILFNSSFKVLA) are cleaved as a signal peptide. Positions 40 to 86 (ADKKVENSNNGQITREINADQISKTELNNEVATDNNRPLGPSIAPSR) are excised as a propeptide. The interval 87-761 (ARNNKIYTFD…YVYDVVFHGM (675 aa)) is S1 metalloprotease domain. The interval 93–367 (YTFDELNRMN…AANDLDLNFG (275 aa)) is activator domain. Residues 377–646 (DFNKIKADAR…MDSLLNNIDN (270 aa)) are catalytic subdomain. Glu-477 is a binding site for Ca(2+). Position 502 (His-502) interacts with Zn(2+). Glu-503 is a catalytic residue. His-506 serves as a coordination point for Zn(2+). Ca(2+)-binding residues include Gly-510, Val-514, and Gly-516. Glu-534 contributes to the Zn(2+) binding site. A helper subdomain region spans residues 654–767 (DEYVNGHEAK…FHGMNTDTNT (114 aa)). An S2 domain region spans residues 762–860 (NTDTNTDVHV…KKIKVVEDKP (99 aa)). Positions 772, 773, 800, 802, 841, 866, 868, 870, 894, 897, 993, 995, 997, 1016, 1020, 1022, and 1023 each coordinate Ca(2+). Residues 774–862 (EPKAVIKSDS…IKVVEDKPVE (89 aa)) enclose the PKD domain. The S3a collagen-binding domain stretch occupies residues 865-979 (NESEPNNDFE…TYTVNVKGNL (115 aa)). Residues 992 to 1104 (KEVENNNDFD…GNYIVNLQNK (113 aa)) are S3b collagen-binding domain.

This sequence belongs to the peptidase M9B family. Collagenase subfamily. It depends on Ca(2+) as a cofactor. Requires Zn(2+) as cofactor.

Its subcellular location is the secreted. The catalysed reaction is Digestion of native collagen in the triple helical region at Xaa-|-Gly bonds. With synthetic peptides, a preference is shown for Gly at P3 and P1', Pro and Ala at P2 and P2', and hydroxyproline, Ala or Arg at P3'.. Functionally, clostridial collagenases are among the most efficient degraders of eukaryotic collagen known; saprophytes use collagen as a carbon source while pathogens additionally digest collagen to aid in host colonization. Has both tripeptidylcarboxypeptidase on Gly-X-Y and endopeptidase activities; the endopeptidase cuts within the triple helix region of collagen while tripeptidylcarboxypeptidase successively digests the exposed ends, thus clostridial collagenases can digest large sections of collagen. This is Collagenase ColA (colA) from Clostridium perfringens (strain 13 / Type A).